The primary structure comprises 184 residues: MSDDLTQHYSQILSILGEDTQRGGLVDTPKRAAKAMQFLTDGYEKNLNDVVNGAIFEADTDEMVVIQNIEYYSLCEHHILPFIGQCHIAYLPQGKVLGLSKFARIVDMYARRLQIQEGLTKQIADAIQEVTGAAGVGVIMEGKHMCMMMRGVQKQNSSMVTSVMLGAMRKSDATRNEFLRLIGK.

Residues Cys75, His78, and Cys146 each coordinate Zn(2+).

This sequence belongs to the GTP cyclohydrolase I family. Toroid-shaped homodecamer, composed of two pentamers of five dimers.

It catalyses the reaction GTP + H2O = 7,8-dihydroneopterin 3'-triphosphate + formate + H(+). Its pathway is cofactor biosynthesis; 7,8-dihydroneopterin triphosphate biosynthesis; 7,8-dihydroneopterin triphosphate from GTP: step 1/1. This chain is GTP cyclohydrolase 1, found in Pseudoalteromonas atlantica (strain T6c / ATCC BAA-1087).